A 232-amino-acid polypeptide reads, in one-letter code: Enolase-phosphatase E1 (232 aa).

This sequence belongs to the HAD-like hydrolase superfamily. MasA/MtnC family. Monomer. It depends on Mg(2+) as a cofactor.

The catalysed reaction is 5-methylsulfanyl-2,3-dioxopentyl phosphate + H2O = 1,2-dihydroxy-5-(methylsulfanyl)pent-1-en-3-one + phosphate. It participates in amino-acid biosynthesis; L-methionine biosynthesis via salvage pathway; L-methionine from S-methyl-5-thio-alpha-D-ribose 1-phosphate: step 3/6. The protein operates within amino-acid biosynthesis; L-methionine biosynthesis via salvage pathway; L-methionine from S-methyl-5-thio-alpha-D-ribose 1-phosphate: step 4/6. Its function is as follows. Bifunctional enzyme that catalyzes the enolization of 2,3-diketo-5-methylthiopentyl-1-phosphate (DK-MTP-1-P) into the intermediate 2-hydroxy-3-keto-5-methylthiopentenyl-1-phosphate (HK-MTPenyl-1-P), which is then dephosphorylated to form the acireductone 1,2-dihydroxy-3-keto-5-methylthiopentene (DHK-MTPene). This is Enolase-phosphatase E1 from Xylella fastidiosa (strain Temecula1 / ATCC 700964).